We begin with the raw amino-acid sequence, 323 residues long: tRNA N6-adenosine threonylcarbamoyltransferase (323 aa).

Fe cation contacts are provided by H106, H110, and Y127. Residues 127 to 131 (YVSGA), D159, G172, E176, and N255 contribute to the substrate site. D283 contacts Fe cation.

This sequence belongs to the KAE1 / TsaD family. Monomer. Component of the KEOPS complex that consists of Kae1, Bud32, Cgi121 and Pcc1; the whole complex dimerizes. Fe(2+) serves as cofactor.

It is found in the cytoplasm. The catalysed reaction is L-threonylcarbamoyladenylate + adenosine(37) in tRNA = N(6)-L-threonylcarbamoyladenosine(37) in tRNA + AMP + H(+). Required for the formation of a threonylcarbamoyl group on adenosine at position 37 (t(6)A37) in tRNAs that read codons beginning with adenine. Is a component of the KEOPS complex that is probably involved in the transfer of the threonylcarbamoyl moiety of threonylcarbamoyl-AMP (TC-AMP) to the N6 group of A37. Kae1 likely plays a direct catalytic role in this reaction, but requires other protein(s) of the complex to fulfill this activity. This Methanocella arvoryzae (strain DSM 22066 / NBRC 105507 / MRE50) protein is tRNA N6-adenosine threonylcarbamoyltransferase.